We begin with the raw amino-acid sequence, 260 residues long: MLYLLLSIEYDGYDYSGWVKQKNARTIQGELEKAFFGICHQKIWTLGASKTDAGVHACDQKVLVKLTFQPRHLAFFIKTVSQTLPPNINIKGYQFVAENFSVRTVKVKEYVYTINDQEYDLFNHRYELKVNAPLNVKKLHQISQIFVGTHDFAYFAGVKPTEDIATVHTINKIWVKRNKAKKIEIHFRGKIFIRYQIRMLTQNILACYAGKVSLTELQAQLNCPPKGTTTKYCAKPYGLCLKKIKYLYTVKLNYKKLIIL.

Asp-52 acts as the Nucleophile in catalysis. Residue Tyr-110 coordinates substrate.

This sequence belongs to the tRNA pseudouridine synthase TruA family. In terms of assembly, homodimer.

It catalyses the reaction uridine(38/39/40) in tRNA = pseudouridine(38/39/40) in tRNA. Formation of pseudouridine at positions 38, 39 and 40 in the anticodon stem and loop of transfer RNAs. This is tRNA pseudouridine synthase A from Spiroplasma kunkelii.